The primary structure comprises 202 residues: MSALPPVYSFPPLYTRQPNSLTRRQQISTWIDIISQYCKTKKIWYMSVDGTVINDNELDSGSTDNDDSKKISKNLFNNEDIQRSVSQVFIDEIWSQMTKEGKCLPIDQSGRRSSNTTTTRYFILWKSLDSWASLILQWFEDSGKLNQVITLYELSEGDETVNWEFHRMPESLLYYCLKPLCDRNRATMLKDENDKVIAIKVV.

The protein belongs to the VPS25 family. Homodimer. Component of the endosomal sorting complex required for transport II (ESCRT-II), which consists of 2 copies of VPS25, 1 copy of SNF8, and 1 copy of VPS36. The ESCRT-II complex interacts directly with the VPS20 subunit of the ESCRT-III complex.

Its subcellular location is the cytoplasm. It localises to the endosome membrane. Component of the ESCRT-II complex (endosomal sorting complex required for transport II), which is required for multivesicular body (MVB) formation and sorting of endosomal cargo proteins into MVBs. The MVB pathway mediates delivery of transmembrane proteins into the lumen of the lysosome for degradation. The ESCRT-II complex is probably involved in the recruitment of the ESCRT-III complex. This Saccharomyces cerevisiae (strain ATCC 204508 / S288c) (Baker's yeast) protein is Vacuolar protein-sorting-associated protein 25 (VPS25).